Consider the following 265-residue polypeptide: Small ribosomal subunit protein uS3 (265 aa).

Residues 39-111 enclose the KH type-2 domain; it reads IREFLNENFS…EVILNIIEVR (73 aa). The interval 224 to 250 is disordered; the sequence is FEAGNQRRGQKRRPRNDQPVKDLNKEK. The span at 238–250 shows a compositional bias: basic and acidic residues; sequence RNDQPVKDLNKEK.

It belongs to the universal ribosomal protein uS3 family. Part of the 30S ribosomal subunit. Forms a tight complex with proteins S10 and S14.

Its function is as follows. Binds the lower part of the 30S subunit head. Binds mRNA in the 70S ribosome, positioning it for translation. In Acholeplasma laidlawii, this protein is Small ribosomal subunit protein uS3.